Consider the following 521-residue polypeptide: MHHPRARYPPGYTSGGGGGGGGGGGGGRGNGGGGFGGGGGGGGGNHGYYGRGPQPQPQQQHYHHQAQQLHQHQQQQQHAQRNSSSQQQQWLRRDQATAAAASGEVAARTAAQLEAVDSSSEDWKAQLNLPAPDTRYRTEDVTATKGNEFEDYFLKRELLMGIYEKGFERPSPIQEESIPIALTGSDILARAKNGTGKTAAFCIPALEKIDPEKNAIQVVILVPTRELALQTSQVCKELGKYLNIQVMVSTGGTSLKDDIMRLYQPVHLLVGTPGRILDLTRKGICVLKDCSMLVMDEADKLLAPEFQPSIEQLIHFLPANRQLLMFSATFPVTVKDFKEKYLPRPYVINLMDELTLKGITQYYAFVEERQKVHCLNTLFSKLQINQSIIFCNSVNRVELLAKKITELGYSCFYIHAKMLQDHRNRVFHDFRNGACRNLVCTDLFTRGIDIQAVNVVINFDFPKTSETYLHRVGRSGRFGHLGLAVNLITYEDRFNLYRIEQELGTEIKTIPPQIDLAVYCQ.

The tract at residues 1-97 (MHHPRARYPP…QQWLRRDQAT (97 aa)) is disordered. Positions 13–50 (TSGGGGGGGGGGGGGRGNGGGGFGGGGGGGGGNHGYYG) are enriched in gly residues. Residues 51-89 (RGPQPQPQQQHYHHQAQQLHQHQQQQQHAQRNSSSQQQQ) show a composition bias toward low complexity. Residues 147–175 (NEFEDYFLKRELLMGIYEKGFERPSPIQE) carry the Q motif motif. One can recognise a Helicase ATP-binding domain in the interval 178–348 (IPIALTGSDI…EKYLPRPYVI (171 aa)). 191–198 (AKNGTGKT) is an ATP binding site. The short motif at 296–299 (DEAD) is the DEAD box element. The 161-residue stretch at 358–518 (GITQYYAFVE…TIPPQIDLAV (161 aa)) folds into the Helicase C-terminal domain.

The protein belongs to the DEAD box helicase family. DDX6/DHH1 subfamily.

The protein localises to the cytoplasm. It is found in the P-body. The catalysed reaction is ATP + H2O = ADP + phosphate + H(+). Its function is as follows. ATP-dependent RNA helicase involved in mRNA turnover, and more specifically in mRNA decapping. This chain is DEAD-box ATP-dependent RNA helicase 12, found in Oryza sativa subsp. japonica (Rice).